The following is a 69-amino-acid chain: Cytochrome c oxidase subunit 8A, mitochondrial (69 aa).

The N-terminal 25 residues, 1–25 (MSVLTPLLLRSLTGSARRLMVPRAQ), are a transit peptide targeting the mitochondrion. Positions 2-19 (SVLTPLLLRSLTGSARRL) match the SIFI-degron motif. The Mitochondrial matrix portion of the chain corresponds to 26-36 (VHSKPAREQLG). Residues 37–60 (VLDITIGLTSCFVCCLLPAGWVLS) form a helical membrane-spanning segment. Residues 61–69 (HLESYKKRE) are Mitochondrial intermembrane-facing.

This sequence belongs to the cytochrome c oxidase VIII family. Component of the cytochrome c oxidase (complex IV, CIV), a multisubunit enzyme composed of 14 subunits. The complex is composed of a catalytic core of 3 subunits MT-CO1, MT-CO2 and MT-CO3, encoded in the mitochondrial DNA, and 11 supernumerary subunits COX4I, COX5A, COX5B, COX6A, COX6B, COX6C, COX7A, COX7B, COX7C, COX8 and NDUFA4, which are encoded in the nuclear genome. The complex exists as a monomer or a dimer and forms supercomplexes (SCs) in the inner mitochondrial membrane with NADH-ubiquinone oxidoreductase (complex I, CI) and ubiquinol-cytochrome c oxidoreductase (cytochrome b-c1 complex, complex III, CIII), resulting in different assemblies (supercomplex SCI(1)III(2)IV(1) and megacomplex MCI(2)III(2)IV(2)). Post-translationally, in response to mitochondrial stress, the precursor protein is ubiquitinated by the SIFI complex in the cytoplasm before mitochondrial import, leading to its degradation. Within the SIFI complex, UBR4 initiates ubiquitin chain that are further elongated or branched by KCMF1.

Its subcellular location is the mitochondrion inner membrane. It participates in energy metabolism; oxidative phosphorylation. Component of the cytochrome c oxidase, the last enzyme in the mitochondrial electron transport chain which drives oxidative phosphorylation. The respiratory chain contains 3 multisubunit complexes succinate dehydrogenase (complex II, CII), ubiquinol-cytochrome c oxidoreductase (cytochrome b-c1 complex, complex III, CIII) and cytochrome c oxidase (complex IV, CIV), that cooperate to transfer electrons derived from NADH and succinate to molecular oxygen, creating an electrochemical gradient over the inner membrane that drives transmembrane transport and the ATP synthase. Cytochrome c oxidase is the component of the respiratory chain that catalyzes the reduction of oxygen to water. Electrons originating from reduced cytochrome c in the intermembrane space (IMS) are transferred via the dinuclear copper A center (CU(A)) of subunit 2 and heme A of subunit 1 to the active site in subunit 1, a binuclear center (BNC) formed by heme A3 and copper B (CU(B)). The BNC reduces molecular oxygen to 2 water molecules using 4 electrons from cytochrome c in the IMS and 4 protons from the mitochondrial matrix. This is Cytochrome c oxidase subunit 8A, mitochondrial (Cox8a) from Mus musculus (Mouse).